The sequence spans 338 residues: Ribosomal RNA small subunit methyltransferase C (338 aa).

Belongs to the methyltransferase superfamily. RsmC family. In terms of assembly, monomer.

The protein resides in the cytoplasm. It carries out the reaction guanosine(1207) in 16S rRNA + S-adenosyl-L-methionine = N(2)-methylguanosine(1207) in 16S rRNA + S-adenosyl-L-homocysteine + H(+). In terms of biological role, specifically methylates the guanine in position 1207 of 16S rRNA in the 30S particle. The protein is Ribosomal RNA small subunit methyltransferase C of Photorhabdus laumondii subsp. laumondii (strain DSM 15139 / CIP 105565 / TT01) (Photorhabdus luminescens subsp. laumondii).